The chain runs to 125 residues: Small ribosomal subunit protein eS8 (125 aa).

A compositionally biased stretch (basic residues) spans 1–23 (MQFQGRSRRKYTGAKLKSARGKR). Positions 1–34 (MQFQGRSRRKYTGAKLKSARGKRKFELGREPAAT) are disordered.

It belongs to the eukaryotic ribosomal protein eS8 family. In terms of assembly, part of the 30S ribosomal subunit.

The polypeptide is Small ribosomal subunit protein eS8 (Methanococcoides burtonii (strain DSM 6242 / NBRC 107633 / OCM 468 / ACE-M)).